The sequence spans 261 residues: uncharacterized protein (261 aa).

It belongs to the PaiB family.

This is an uncharacterized protein from Aspergillus fumigatus (strain ATCC MYA-4609 / CBS 101355 / FGSC A1100 / Af293) (Neosartorya fumigata).